Reading from the N-terminus, the 751-residue chain is Myb-related protein A (751 aa).

Residues 1-22 (MAKRSRSEDEDDDLQYADHDYE) are disordered. 3 HTH myb-type domains span residues 30 to 81 (KKLW…QKVL), 82 to 137 (NPEL…NPEV), and 138 to 188 (KKSS…RRKV). 3 DNA-binding regions (H-T-H motif) span residues 58-81 (WTLIASHLQNRSDFQCQHRWQKVL), 110-133 (WSLIAKHLKGRIGKQCRERWHNHL), and 161-184 (WAEIAKLLPGRTDNSIKNHWNSTM). A Glycyl lysine isopeptide (Lys-Gly) (interchain with G-Cter in SUMO2) cross-link involves residue Lys199. A transcriptional activation domain region spans residues 230 to 294 (IPGYQYVSPD…RLPPQPGSFS (65 aa)). The negative regulatory domain stretch occupies residues 297-552 (SGSFLMDDSM…IRRSILGTTP (256 aa)). Lys393 bears the N6-acetyllysine mark. Residues Lys591 and Lys601 each participate in a glycyl lysine isopeptide (Lys-Gly) (interchain with G-Cter in SUMO2) cross-link.

Component of the DREAM complex (also named LINC complex) at least composed of E2F4, E2F5, LIN9, LIN37, LIN52, LIN54, MYBL1, MYBL2, RBL1, RBL2, RBBP4, TFDP1 and TFDP2. The complex exists in quiescent cells where it represses cell cycle-dependent genes. It dissociates in S phase when LIN9, LIN37, LIN52 and LIN54 form a subcomplex that binds to MYBL2. In terms of tissue distribution, predominantly in the testis. Very low levels in the ovaries, spleen and brain.

It is found in the nucleus. Transcription factor that specifically recognizes the sequence 5'-YAAC[GT]G-3'. Acts as a master regulator of male meiosis by promoting expression of piRNAs: activates expression of both piRNA precursor RNAs and expression of protein-coding genes involved in piRNA metabolism, such as PIWIL1. The piRNA metabolic process mediates the repression of transposable elements during meiosis by forming complexes composed of piRNAs and Piwi proteins and governs the methylation and subsequent repression of transposons, which is essential for the germline integrity. Transcriptional activator of SOX30. The chain is Myb-related protein A (Mybl1) from Mus musculus (Mouse).